The following is a 320-amino-acid chain: Very-long-chain 3-oxoacyl-CoA reductase (320 aa).

The helical transmembrane segment at 17 to 37 (FWYLGVVAAVWWGLRAAWCLL) threads the bilayer. Position 56–85 (56–85 (GKWAVVTGATDGIGKAYAEELAKRGMNIVL)) interacts with NADP(+). The next 2 membrane-spanning stretches (helical) occupy residues 189–209 (GVIL…LTVY) and 283–303 (AIMG…SLGM). Residue serine 196 participates in substrate binding. The Proton acceptor role is filled by tyrosine 209.

It belongs to the short-chain dehydrogenases/reductases (SDR) family. 17-beta-HSD 3 subfamily.

The protein resides in the endoplasmic reticulum membrane. The catalysed reaction is a very-long-chain (3R)-3-hydroxyacyl-CoA + NADP(+) = a very-long-chain 3-oxoacyl-CoA + NADPH + H(+). It catalyses the reaction 17beta-estradiol + NAD(+) = estrone + NADH + H(+). It carries out the reaction 17beta-estradiol + NADP(+) = estrone + NADPH + H(+). The enzyme catalyses 3-oxooctadecanoyl-CoA + NADPH + H(+) = (3R)-hydroxyoctadecanoyl-CoA + NADP(+). The catalysed reaction is (7Z,10Z,13Z,16Z)-3-oxodocosatetraenoyl-CoA + NADPH + H(+) = (3R)-hydroxy-(7Z,10Z,13Z,16Z)-docosatetraenoyl-CoA + NADP(+). It catalyses the reaction 3-oxo-(7Z,10Z,13Z,16Z,19Z)-docosapentaenoyl-CoA + NADPH + H(+) = (3R)-hydroxy-(7Z,10Z,13Z,16Z,19Z)-docosapentaenoyl-CoA + NADP(+). It carries out the reaction (8Z,11Z,14Z)-3-oxoeicosatrienoyl-CoA + NADPH + H(+) = (3R)-hydroxy-(8Z,11Z,14Z)-eicosatrienoyl-CoA + NADP(+). It functions in the pathway lipid metabolism; fatty acid biosynthesis. The protein operates within steroid biosynthesis; estrogen biosynthesis. Its function is as follows. Catalyzes the second of the four reactions of the long-chain fatty acids elongation cycle. This endoplasmic reticulum-bound enzymatic process, allows the addition of two carbons to the chain of long- and very long-chain fatty acids/VLCFAs per cycle. This enzyme has a 3-ketoacyl-CoA reductase activity, reducing 3-ketoacyl-CoA to 3-hydroxyacyl-CoA, within each cycle of fatty acid elongation. Thereby, it may participate in the production of VLCFAs of different chain lengths that are involved in multiple biological processes as precursors of membrane lipids and lipid mediators. May also catalyze the transformation of estrone (E1) into estradiol (E2) and play a role in estrogen formation. This chain is Very-long-chain 3-oxoacyl-CoA reductase (hsd17b12), found in Xenopus tropicalis (Western clawed frog).